Reading from the N-terminus, the 119-residue chain is Ribonuclease P protein component (119 aa).

It belongs to the RnpA family. As to quaternary structure, consists of a catalytic RNA component (M1 or rnpB) and a protein subunit.

The catalysed reaction is Endonucleolytic cleavage of RNA, removing 5'-extranucleotides from tRNA precursor.. RNaseP catalyzes the removal of the 5'-leader sequence from pre-tRNA to produce the mature 5'-terminus. It can also cleave other RNA substrates such as 4.5S RNA. The protein component plays an auxiliary but essential role in vivo by binding to the 5'-leader sequence and broadening the substrate specificity of the ribozyme. The sequence is that of Ribonuclease P protein component from Pectobacterium atrosepticum (strain SCRI 1043 / ATCC BAA-672) (Erwinia carotovora subsp. atroseptica).